Here is a 488-residue protein sequence, read N- to C-terminus: Ribulose bisphosphate carboxylase large chain (488 aa).

2 residues coordinate substrate: N127 and T177. The active-site Proton acceptor is the K179. K181 provides a ligand contact to substrate. Mg(2+) contacts are provided by K205, D207, and E208. N6-carboxylysine is present on K205. H297 acts as the Proton acceptor in catalysis. Positions 298, 330, and 382 each coordinate substrate.

This sequence belongs to the RuBisCO large chain family. Type I subfamily. As to quaternary structure, heterohexadecamer of 8 large chains and 8 small chains. Mg(2+) serves as cofactor.

It localises to the plastid. The protein localises to the chloroplast. The enzyme catalyses 2 (2R)-3-phosphoglycerate + 2 H(+) = D-ribulose 1,5-bisphosphate + CO2 + H2O. The catalysed reaction is D-ribulose 1,5-bisphosphate + O2 = 2-phosphoglycolate + (2R)-3-phosphoglycerate + 2 H(+). Its function is as follows. RuBisCO catalyzes two reactions: the carboxylation of D-ribulose 1,5-bisphosphate, the primary event in carbon dioxide fixation, as well as the oxidative fragmentation of the pentose substrate in the photorespiration process. Both reactions occur simultaneously and in competition at the same active site. This Pyropia dentata (Red alga) protein is Ribulose bisphosphate carboxylase large chain (rbcL).